We begin with the raw amino-acid sequence, 328 residues long: 2,3-diketo-L-gulonate-binding periplasmic protein YiaO (328 aa).

The signal sequence occupies residues 1-24; that stretch reads MKLRSVTYALFIAGLAAFSTSSLA.

In terms of assembly, the complex comprises the extracytoplasmic solute receptor protein YiaO, and the two transmembrane proteins YiaM and YiaN.

It is found in the periplasm. Functionally, part of the tripartite ATP-independent periplasmic (TRAP) transport system YiaMNO involved in the uptake of 2,3-diketo-L-gulonate. This protein specifically binds 2,3-diketo-L-gulonate. Is not able to bind either L-ascorbate or dehydroascorbate. The chain is 2,3-diketo-L-gulonate-binding periplasmic protein YiaO (yiaO) from Escherichia coli (strain K12).